The chain runs to 414 residues: MSGIIATYVIHDDSHNLTKKAEQIALGLTIGSWTHLPHLLQKQLKQHKGNVVHVEELPQQEEVNNYLGKKVTKGIIKIQYPSLNFSPDLPAILTTAFGKLSLDGEIKLIDLTFSDDLKRQFSGPKFGIEEVRKRLHVHNRPLLMSIFKGMIGRNIGYLKTQLRDQAIGGVDIVKDDEILFENALTPLEKRVRSGKEVLQSVYETYGHRTLYAVNITGRTYDVKENAKRAVNAGADLLLFNAFAYGLDVLQLLAEDQDINVPIMAHPAISGAYTSSKLYGFSHSLLLGKLLRYAGADFSLFPSPYGNVALEKKDALQIAETLTIVDSHLKRSFPVPSAGIHPGFVPFILRDFGNDVVINAGGGIHGHPNGAQGGGKAFRAAIDATLQGTPLHEVDDADLHTALQLWGNPSREVKI.

Lys-99 serves as the catalytic Proton acceptor. Substrate-binding positions include Lys-148, 174-177, His-265, Gly-338, and 360-361; these read KDDE and GG. The Mg(2+) site is built by Lys-174, Asp-176, and Glu-177. The residue at position 174 (Lys-174) is an N6-carboxylysine.

The protein belongs to the RuBisCO large chain family. Type IV subfamily. Homodimer. Requires Mg(2+) as cofactor.

The catalysed reaction is 5-methylsulfanyl-2,3-dioxopentyl phosphate = 2-hydroxy-5-methylsulfanyl-3-oxopent-1-enyl phosphate. The protein operates within amino-acid biosynthesis; L-methionine biosynthesis via salvage pathway; L-methionine from S-methyl-5-thio-alpha-D-ribose 1-phosphate: step 3/6. Its function is as follows. Catalyzes the enolization of 2,3-diketo-5-methylthiopentyl-1-phosphate (DK-MTP-1-P) into 2-hydroxy-3-keto-5-methylthiopentenyl-1-phosphate (HK-MTPenyl-1-P). This chain is 2,3-diketo-5-methylthiopentyl-1-phosphate enolase, found in Bacillus cytotoxicus (strain DSM 22905 / CIP 110041 / 391-98 / NVH 391-98).